A 259-amino-acid chain; its full sequence is MATIKEIKEFLVTVKELESPIFLELEKDNRSGVQKEISKRKRAIQAELDENLRLESMLSYEKELYKQGLTLIVGIDEVGRGPLAGPVVAAAVILPKNCKIKGLNDSKKIPKKKHLEIFQAVQDQALSIGIGIIDNQVIDQVNIYEATKLAMQEAISQLSPQPEHLLIDAMKLDLPISQTSIIKGDANSLSIAAASIVAKVTRDELMKEYDQQFPGYDFATNAGYGTAKHLEGLTKLGVTPIHRTSFEPVKSLVLGKKES.

Residues 70–258 (TLIVGIDEVG…VKSLVLGKKE (189 aa)) enclose the RNase H type-2 domain. 3 residues coordinate a divalent metal cation: D76, E77, and D168.

Belongs to the RNase HII family. Requires Mn(2+) as cofactor. Mg(2+) is required as a cofactor.

It localises to the cytoplasm. The catalysed reaction is Endonucleolytic cleavage to 5'-phosphomonoester.. Functionally, endonuclease that specifically degrades the RNA of RNA-DNA hybrids. The protein is Ribonuclease HII of Streptococcus pneumoniae (strain ATCC 700669 / Spain 23F-1).